The chain runs to 780 residues: Pumilio domain-containing protein C4G8.03c (780 aa).

Disordered regions lie at residues 1–29 (MVNRDAYNELNLNKKSQETNRKPSPLSSY), 298–330 (LSHFPDHLDPSRIPSPYQPSSLQPLESRKLHSK), and 358–411 (NHHS…GKTV). A compositionally biased stretch (basic and acidic residues) spans 298–307 (LSHFPDHLDP). A compositionally biased stretch (low complexity) spans 311–322 (PSPYQPSSLQPL). Residues 358–382 (NHHSSLSMDNDPTNVSTKNRNNQTV) show a composition bias toward polar residues. The region spanning 435–778 (EKSDDLSNLL…HILAKLTSST (344 aa)) is the PUM-HD domain. 9 Pumilio repeats span residues 462-497 (GFLGHLSTICKDQYGCRYLQKLLDENPKVNASLFFP), 498-533 (EIRQSVVQLMIDPFGNYMCQKLFVYASREQKLSMLN), 534-569 (GIGEGIVDICSNLYGTRSMQNIIDKLTSNEQISLLL), 570-606 (KIIIPSLTTLACDNNGTHVLQKCIAKFPPEKLEPLFL), 607-642 (SMEENLITLATNRHGCCILQRCLDRTNGDIQERLVN), 643-678 (SIIKSCLLLVQNAYGNYLVQHVLELNIQPYTERIIE), 679-714 (KFFGNICKLSLQKFSSNAIEQCIRTASPSTREQMLQ), 715-752 (EFLSFPNIEQLLDDCYANYVMQRFLNVADESQKFLILR), and 753-780 (SISHVIPKIQNTRHGRHILAKLTSSTSS).

In Schizosaccharomyces pombe (strain 972 / ATCC 24843) (Fission yeast), this protein is Pumilio domain-containing protein C4G8.03c.